Here is a 608-residue protein sequence, read N- to C-terminus: MLRSSRITAGTCVSRGWHSYTTKTPTKTAIPPAAKSSNEAKDLILSVLQSAATKREAKTYISRYAPLTGVELQKKKEGLVQRLLGVGKEQDNKEIENLTGHAPEGLLGDSEGTLRVAIIKIRDIKSIEDDLIAQMGETIARLSRLGVSPIVVVDAGKARNDFLKLDNKPFRHYQKLILQKVFKISDAIDAASPDVGARPIEGLFSMNKKGLRLAMPQMLMHPLSHGKVPVLAPLAYDDVTSEEKLVMADDVVHFLTQKLAEVPANILSVEKIIFVDPLGGIPSVERSGAHVFVNLKQELSDIAAELHMGFIPPAQREVHLANLKAMHKALKFLPPTASGLITTPAVAAIPSVGRNPIIYNVLTDRPVISPSLPVELKKTPTLETTLLREGMPVITLKSDKGLNLITEHEKGNIDLDRLWHLIEDSFGRRIDKQHYLNRVNGKIAGIIIAGDYEGAAIITWEDIDPVKAQEDRDAADRAAAEAAAAYAAGIPLPSPPLYQKLGDAVPLNPNQVAYLDKFAVLKRSQGSSSVADVVFKGMVMSQFPNELLWRSRKNNPVNKWYFDRSKGSFKIPGSEWCMFWTGRKTREQYLERFVDICTRIEPSLREEL.

The region spanning 402–604 (LNLITEHEKG…DICTRIEPSL (203 aa)) is the N-acetyltransferase domain.

Belongs to the acetyltransferase family.

Its subcellular location is the mitochondrion. The enzyme catalyses L-glutamate + acetyl-CoA = N-acetyl-L-glutamate + CoA + H(+). It functions in the pathway amino-acid biosynthesis; L-arginine biosynthesis; N(2)-acetyl-L-ornithine from L-glutamate: step 1/4. Functionally, N-acetylglutamate synthase involved in arginine biosynthesis. In Yarrowia lipolytica (strain CLIB 122 / E 150) (Yeast), this protein is Amino-acid acetyltransferase, mitochondrial (ARG2).